Consider the following 695-residue polypeptide: UvrABC system protein C (695 aa).

Basic and acidic residues predominate over residues 1–10; the sequence is MNQDPAETRD. Positions 1–53 are disordered; it reads MNQDPAETRDTAAPPPADTTSPSPVSPELEPRSAPGAQDIDAASASLTVDEDD. Positions 18–27 are enriched in low complexity; it reads DTTSPSPVSP. A GIY-YIG domain is found at 88–166; sequence TSPGVYRMLN…IKQLRPRFNV (79 aa). The region spanning 276 to 311 is the UVR domain; that stretch reads RAVKQELAVEMEKASNELEFETAALYRDRLAALSAI.

The protein belongs to the UvrC family. In terms of assembly, interacts with UvrB in an incision complex.

Its subcellular location is the cytoplasm. In terms of biological role, the UvrABC repair system catalyzes the recognition and processing of DNA lesions. UvrC both incises the 5' and 3' sides of the lesion. The N-terminal half is responsible for the 3' incision and the C-terminal half is responsible for the 5' incision. The chain is UvrABC system protein C from Rhodopseudomonas palustris (strain BisB5).